Consider the following 402-residue polypeptide: Choline dehydrogenase (402 aa).

It belongs to the iron-containing alcohol dehydrogenase family.

It carries out the reaction choline + NAD(+) = betaine aldehyde + NADH + H(+). The protein operates within amine and polyamine biosynthesis; betaine biosynthesis via choline pathway; betaine aldehyde from choline (dehydrogenase route): step 1/1. Involved in the biosynthesis of the osmoprotectant glycine betaine from choline. The sequence is that of Choline dehydrogenase from Bacillus subtilis (strain 168).